We begin with the raw amino-acid sequence, 1337 residues long: Sister chromatid cohesion protein PDS5 homolog A (1337 aa).

N-acetylmethionine is present on methionine 1. The HEAT repeat unit spans residues 393 to 429 (ALVNDQLLGFVRERTLDKRWRVRKEAMMGLAQLYKKY). Serine 1097 bears the Phosphoserine mark. Lysine 1146 carries the N6-acetyllysine modification. The disordered stretch occupies residues 1150–1337 (ATGRKPYVRS…PAERQIDLQR (188 aa)). Positions 1159–1180 (STGTETGSNINVNSELNPSTGN) are enriched in polar residues. Phosphoserine is present on serine 1195. Threonine 1208 is subject to Phosphothreonine. Position 1211 is an N6-acetyllysine (lysine 1211). The segment covering 1223-1233 (SDQATQGNISS) has biased composition (polar residues). Lysine 1290 carries the post-translational modification N6-acetyllysine. Phosphoserine is present on serine 1305. A compositionally biased stretch (basic and acidic residues) spans 1321-1337 (DLAKKAAPAERQIDLQR).

Belongs to the PDS5 family. As to quaternary structure, interacts with the cohesin complex. Interacts with WAPL (via FGF motifs) or CDCA5 (via the FGF motif); the interaction is direct, cohesin-dependent and competitive. Interacts with SMC3. Interacts with TP63. In terms of tissue distribution, highest level in colon. Low levels in lung, ovary, breast and kidney. Reduced level in renal tumor tissue. Isoform 2 is expressed in kidney.

The protein resides in the nucleus. In terms of biological role, probable regulator of sister chromatid cohesion in mitosis which may stabilize cohesin complex association with chromatin. May couple sister chromatid cohesion during mitosis to DNA replication. Cohesion ensures that chromosome partitioning is accurate in both meiotic and mitotic cells and plays an important role in DNA repair. This Homo sapiens (Human) protein is Sister chromatid cohesion protein PDS5 homolog A.